A 409-amino-acid polypeptide reads, in one-letter code: Phosphatidylserine decarboxylase proenzyme, mitochondrial (409 aa).

The N-terminal 52 residues, 1–52 (MATSVGHRCLGLLHGVAPWRSSLHPCEITALSQSLQPLRKLPFRAFRTDARK), are a transit peptide targeting the mitochondrion. The necessary for localization to both lipid droplets and mitochondria stretch occupies residues 36-103 (QPLRKLPFRA…LGLEIPPKLA (68 aa)). Over 53 to 63 (IHTAPARTMFL) the chain is Mitochondrial matrix. Residues 64 to 82 (LRPLPILLVTGGGYAGYRQ) form a helical membrane-spanning segment. Topologically, residues 83–409 (YEKYRERELE…IRFGEALGSL (327 aa)) are mitochondrial intermembrane. Residues Asp-191, His-267, and Ser-378 each act as charge relay system; for autoendoproteolytic cleavage activity in the active site. Ser-378 (schiff-base intermediate with substrate; via pyruvic acid; for decarboxylase activity) is an active-site residue. A Pyruvic acid (Ser); by autocatalysis modification is found at Ser-378.

Belongs to the phosphatidylserine decarboxylase family. PSD-B subfamily. Eukaryotic type I sub-subfamily. Heterodimer of a large membrane-associated beta subunit and a small pyruvoyl-containing alpha subunit. Pyruvate is required as a cofactor. Post-translationally, is synthesized initially as an inactive proenzyme. Formation of the active enzyme involves a self-maturation process in which the active site pyruvoyl group is generated from an internal serine residue via an autocatalytic post-translational modification. Two non-identical subunits are generated from the proenzyme in this reaction, and the pyruvate is formed at the N-terminus of the alpha chain, which is derived from the carboxyl end of the proenzyme. The autoendoproteolytic cleavage occurs by a canonical serine protease mechanism, in which the side chain hydroxyl group of the serine supplies its oxygen atom to form the C-terminus of the beta chain, while the remainder of the serine residue undergoes an oxidative deamination to produce ammonia and the pyruvoyl prosthetic group on the alpha chain. During this reaction, the Ser that is part of the protease active site of the proenzyme becomes the pyruvoyl prosthetic group, which constitutes an essential element of the active site of the mature decarboxylase.

The protein resides in the mitochondrion inner membrane. It localises to the cytoplasm. It is found in the lipid droplet. The catalysed reaction is a 1,2-diacyl-sn-glycero-3-phospho-L-serine + H(+) = a 1,2-diacyl-sn-glycero-3-phosphoethanolamine + CO2. Its pathway is phospholipid metabolism; phosphatidylethanolamine biosynthesis. Its function is as follows. Catalyzes the formation of phosphatidylethanolamine (PtdEtn) from phosphatidylserine (PtdSer). Plays a central role in phospholipid metabolism and in the interorganelle trafficking of phosphatidylserine. May be involved in lipid droplet biogenesis at the endoplasmic reticulum membrane. The polypeptide is Phosphatidylserine decarboxylase proenzyme, mitochondrial (Homo sapiens (Human)).